A 595-amino-acid chain; its full sequence is NADH-quinone oxidoreductase subunit C/D (595 aa).

The segment at 1–186 (MVTDNSKATD…TPYFLNNAKQ (186 aa)) is NADH dehydrogenase I subunit C. The interval 210 to 595 (DFMFLNLGPN…IDIVMADTDR (386 aa)) is NADH dehydrogenase I subunit D.

The protein in the N-terminal section; belongs to the complex I 30 kDa subunit family. This sequence in the C-terminal section; belongs to the complex I 49 kDa subunit family. As to quaternary structure, NDH-1 is composed of 13 different subunits. Subunits NuoB, CD, E, F, and G constitute the peripheral sector of the complex.

It localises to the cell inner membrane. It catalyses the reaction a quinone + NADH + 5 H(+)(in) = a quinol + NAD(+) + 4 H(+)(out). NDH-1 shuttles electrons from NADH, via FMN and iron-sulfur (Fe-S) centers, to quinones in the respiratory chain. The immediate electron acceptor for the enzyme in this species is believed to be ubiquinone. Couples the redox reaction to proton translocation (for every two electrons transferred, four hydrogen ions are translocated across the cytoplasmic membrane), and thus conserves the redox energy in a proton gradient. The protein is NADH-quinone oxidoreductase subunit C/D of Psychrobacter sp. (strain PRwf-1).